Consider the following 352-residue polypeptide: MKEKNKHILVAMSGGVDSTVAAALLLAQGHQVSGVTMRVWDTEPLGDGREPAHIRDARKVAFDLGIPLHVVDLREEFLQQVVTPFCEEYLSGRTPNPCVLCNRVFKFSRLLREADRLGADALATGHYARIVEHDGLKVLAKGSNRQKDQSYFLFTLTQQQLQRVVFPLGEMSKEEVRTHAERLGLHVAQKGDSQDICFIPDGDYIGFLERQSHATDTEGSIVHVSGKRLGKHRGAYRFTVGQRRGLGIAWPEPLYVVAIDAAKKQVIVGEKEHLHVDRLVTTGTNWIVAQPQQPLQARCRIRYRHQEAPCTLVVLGNDRVEVRFDEPQSGVSPGQAAVFYDEDRVLGGGWIA.

Residues 11–18 and Met37 contribute to the ATP site; that span reads AMSGGVDS. The active-site Nucleophile is Cys101. A disulfide bridge connects residues Cys101 and Cys197. An ATP-binding site is contributed by Gly125. Residues 147–149 are interaction with tRNA; it reads KDQ. Residue Cys197 is the Cysteine persulfide intermediate of the active site. The interaction with tRNA stretch occupies residues 302-303; it reads RY.

It belongs to the MnmA/TRMU family.

The protein localises to the cytoplasm. It carries out the reaction S-sulfanyl-L-cysteinyl-[protein] + uridine(34) in tRNA + AH2 + ATP = 2-thiouridine(34) in tRNA + L-cysteinyl-[protein] + A + AMP + diphosphate + H(+). Functionally, catalyzes the 2-thiolation of uridine at the wobble position (U34) of tRNA, leading to the formation of s(2)U34. The chain is tRNA-specific 2-thiouridylase MnmA from Syntrophotalea carbinolica (strain DSM 2380 / NBRC 103641 / GraBd1) (Pelobacter carbinolicus).